A 388-amino-acid polypeptide reads, in one-letter code: Transcription factor TB1 (388 aa).

Residues 115–173 enclose the TCP domain; it reads RKDRHSKISTAGGMRDRRMRLSLDVARKFFALQDMLGFDKASKTVQWLLNMSKAAIREI. Disordered regions lie at residues 180–269 and 289–331; these read SVCE…EKNR and AAGE…VGVS. Over residues 187–201 the composition is skewed to polar residues; that stretch reads SSSLSVDGKQQQHSN. 2 stretches are compositionally biased toward basic and acidic residues: residues 210-224 and 247-269; these read GDHK…DGKK and VPDK…EKNR. The R domain occupies 250–267; the sequence is KESRAKARERARERTKEK. Residues 289-314 show a composition bias toward low complexity; the sequence is AAGEDKSPTSPSNNLNHSSSTNLVST.

Interacts with MADS57. In terms of tissue distribution, expressed in the axillary bud of the first formed leaf node. Expressed in axillary buds, shoot apical meristem, young leaves, vascular tissues and the tips of crown roots.

The protein resides in the nucleus. Its function is as follows. Probable transcription factor that functions as a negative regulator of lateral branching, presumably through its expression in axillary buds. Involved in the fine tuning of shoot branching. May function as an integrator of multiple signaling pathways to regulate the development of axillary buds. Works partially downstream of strigolactones to inhibit bud outgrowth. Binds to MADS57 to suppress the negative regulation of D14 by MADS57 and balance the expression of D14 for tillering. This chain is Transcription factor TB1, found in Oryza sativa subsp. japonica (Rice).